We begin with the raw amino-acid sequence, 498 residues long: NAD(P)H-quinone oxidoreductase chain 4, chloroplastic (498 aa).

14 helical membrane passes run 4–24 (LPWLTLIVLFPFSASFLIPLL), 37–57 (LGICALEFLLITFTFCCQFHL), 87–107 (MGLILLTGFITTLAILAAWPV), 111–131 (VRLFYFLMLAMYSGQIGLFAS), 134–154 (ILLFFFMWELELIPVYLLLSM), 167–187 (FLLYTAGGSIFLLVGSLTMGL), 207–227 (IAVETALYFSFLIAYAVKLPI), 242–262 (HYSTCMLLAGILLKMGGYGLI), 274–294 (FLFSPLLVTMGAVQIAYASLI), 305–325 (IAYSSVSHMGFVIIGISSITD), 331–351 (AILQMISHGLIGAALFFLAGI), 386–406 (LALPGMSSFVAEFLIFLGIVT), 417–437 (IILFIGAIGVILTPIYLLSML), and 461–481 (IFISVFILLPILGIGIYPNLV).

This sequence belongs to the complex I subunit 4 family.

The protein localises to the plastid. It localises to the chloroplast thylakoid membrane. The enzyme catalyses a plastoquinone + NADH + (n+1) H(+)(in) = a plastoquinol + NAD(+) + n H(+)(out). It carries out the reaction a plastoquinone + NADPH + (n+1) H(+)(in) = a plastoquinol + NADP(+) + n H(+)(out). The sequence is that of NAD(P)H-quinone oxidoreductase chain 4, chloroplastic from Psilotum nudum (Whisk fern).